We begin with the raw amino-acid sequence, 591 residues long: NADPH oxidase 1 (591 aa).

At 1 to 36 (MAGELRGSRGPLQRIQIAPREAPNLHLTMGNWLVNH) the chain is on the cytoplasmic side. The helical transmembrane segment at 37–59 (WLSVLFLVSWLGLNIFLFVYAFL) threads the bilayer. The Extracellular portion of the chain corresponds to 60–72 (NYEKSDKYYYTRE). Residues 73-97 (ILGTALALARASALCLNFNSMMILI) traverse the membrane as a helical segment. In terms of domain architecture, Ferric oxidoreductase spans 82–316 (RASALCLNFN…YIFERILRFY (235 aa)). At 98-130 (PVCRNLLSFLRGTCSFCNRTLRKPLDHNLTFHK) the chain is on the cytoplasmic side. Residues His129 and His143 each coordinate heme. A helical transmembrane segment spans residues 131-151 (LVAYMICIFTVIHIIAHLFNF). At 152 to 195 (ERYRRSQQAMDGSLASVLSSLSHPEKEDSWLNPIQSPNMTVMYA) the chain is on the extracellular side. A glycan (N-linked (GlcNAc...) asparagine) is linked at Asn189. The helical transmembrane segment at 196–216 (AFTSIAGLTGVIATVALVLMV) threads the bilayer. Topologically, residues 217–234 (TSAMEFIRRNYFELFWYT) are cytoplasmic. Residues 235-255 (HHLFIVYIICLGIHGLGGIVR) form a helical membrane-spanning segment. Heme contacts are provided by His236 and His248. Residues 256–423 (GQTEESLGES…TVSEDVFQYE (168 aa)) lie on the Extracellular side of the membrane. N-linked (GlcNAc...) asparagine glycosylation is present at Asn269. Positions 317–418 (RSQQKVVITK…DGPFGTVSED (102 aa)) constitute an FAD-binding FR-type domain. FAD is bound at residue 365 to 371 (HPFTLTS). Residues 424 to 444 (VAVLVGAGIGVTPFASILKSI) traverse the membrane as a helical segment. Positions 424-563 (VAVLVGAGIG…GVFLCGPRTL (140 aa)) are interaction with NOXO1. At 445–591 (WYKFQRADNK…VQFYFNKETF (147 aa)) the chain is on the cytoplasmic side. Thr457 bears the Phosphothreonine mark.

As to quaternary structure, NOX1, NOXA1, NOXO1, RAC1 and CYBA forms a functional multimeric complex supporting ROS production. Interacts with NOXO1. Interacts (via FAD-binding FR-type domain) with ARHGEF7 (via PH domain). Interacts with NOXA1. FAD serves as cofactor. Post-translationally, phosphorylation at Thr-457 mediated by PKC/PRKBC positively regulates its interaction with NOXA1 and enzyme activity. As to expression, expressed in colon and vascular smooth muscle cells (VSMC).

It localises to the cell projection. The protein resides in the invadopodium membrane. Its subcellular location is the cell membrane. It carries out the reaction NADPH + 2 O2 = 2 superoxide + NADP(+) + H(+). With respect to regulation, the oxidase activity is potentiated by NOXA1 and NOXO1. NADPH oxidase that catalyzes the generation of superoxide from molecular oxygen utilizing NADPH as an electron donor. The protein is NADPH oxidase 1 (Nox1) of Mus musculus (Mouse).